Here is a 1072-residue protein sequence, read N- to C-terminus: Serine/threonine-protein kinase 11-interacting protein (1072 aa).

8 LRR repeats span residues 109–130 (SLRQLELRGVPIHSLCGLRGIY), 132–152 (QLESLVCNRSIQALEELLSAC), 164–185 (ALLSADFSYNALRSLDSSLRLL), 187–209 (ALRFLNLSHNHLQDCKGFLMDLC), 210–231 (ELYHLDISYNHLRLVPRVGPSG), 233–254 (ALGTLILRANELRSLQGLEQLK), 255–276 (NLRHLDVAYNLLEGHTELAPLW), and 280–301 (ELRKLYLEGNPLWFHPAHRAAT). A disordered region spans residues 333-366 (DSSGLGPVIQPLSWPVGSTTETSGGPELSDSLSS). Phosphoserine occurs at positions 388, 390, and 393. Positions 441–454 (MGSSPLSTTKTPAL) are enriched in polar residues. 2 disordered regions span residues 441–522 (MGSS…EQKA) and 741–762 (RPDGIPPQTSISHDRSSWSLSP). Basic and acidic residues-rich tracts occupy residues 478–492 (KESPEKVSEEGRVEP) and 501–510 (EQDKEEGSRE). A phosphoserine mark is found at S757, S761, and S763. Positions 967–993 (HAESPLPVVSDETSEQPASLGPGPSLQ) are disordered.

It belongs to the STK11IP family. In terms of assembly, found in a ternary complex composed of STK11/LKB1, STK11IP and SMAD4. Interacts with SMAD4. Interacts with STK11/LKB1.

It is found in the cytoplasm. May regulate STK11/LKB1 function by controlling its subcellular localization. The polypeptide is Serine/threonine-protein kinase 11-interacting protein (Stk11ip) (Mus musculus (Mouse)).